The following is a 695-amino-acid chain: MPMHIPFPFNWIPTLPVARCQESPSLLKRAGTEKLREVFLKYASIQKNGEHYMTSEDFVRKFLGLFSESAFNDESVRLLANIADTSKDGLISFSEFQAFEGLLCTPDALYRTAFQLFDRKGNGTVSYADFADVVQKTELHSKIPFSLDGPFIKRYFGDKKQRLINYAEFTQLLHDFHEEHAMEAFRSKDPAGTGFISPLDFQDIIVNVKRHLLTPGVRDNLVSVTEGHKVSFPYFIAFTSLLNNMELIKQVYLHATEGSRTDMITKDQILLAAQTMSQITPLEIDILFHLAGAVHQAGRIDYSDLSNIAPEHYTKHMTHRLAEIKAVESPADRSAFIQVLESSYRFTLGSFAGAVGATVVYPIDLVKTRMQNQRAGSYIGEVAYRNSWDCFKKVVRHEGFMGLYRGLLPQLMGVAPEKAIKLTVNDLVRDKLTDKKGNIPTWAEVLAGGCAGASQVVFTNPLEIVKIRLQVAGEIASGSKIRAWSVVRELGLFGLYKGARACLLRDVPFSAIYFPTYAHTKAMMADKDGYNHPLTLLAAGAIAGVPAASLVTPADVIKTRLQVVARSGQTTYTGVWDATKKIMAEEGPRAFWKGTAARVFRSSPQFGVTLVTYELLQRLFYVDFGGTQPKGSEAHKITTPLEQAAASVTTENVDHIGGYRAAVPLLAGVESKFGLYLPRFGRGVTAASPSTATGS.

Residues 1 to 310 are N-terminal domain; it reads MPMHIPFPFN…DYSDLSNIAP (310 aa). Over 2–345 the chain is Mitochondrial intermembrane; the sequence is PMHIPFPFNW…FIQVLESSYR (344 aa). EF-hand domains follow at residues 71–104, 105–140, 142–175, and 176–211; these read FNDE…GLLC, TPDA…TELH, KIPF…LLHD, and FHEE…VKRH. 9 residues coordinate Ca(2+): Asp-84, Ser-86, Asp-88, Leu-90, Glu-95, Asp-118, Asn-122, Thr-124, and Asp-129. Ca(2+) contacts are provided by Asp-189, Thr-193, and Asp-200. The tract at residues 311–327 is linker loop domain; that stretch reads EHYTKHMTHRLAEIKAV. The carrier domain stretch occupies residues 336–627; sequence FIQVLESSYR…RLFYVDFGGT (292 aa). Solcar repeat units follow at residues 340-431, 439-523, and 531-619; these read LESS…VRDK, IPTW…TKAM, and NHPL…LQRL. The chain crosses the membrane as a helical span at residues 346–363; it reads FTLGSFAGAVGATVVYPI. Residues 364–405 lie on the Mitochondrial matrix side of the membrane; it reads DLVKTRMQNQRAGSYIGEVAYRNSWDCFKKVVRHEGFMGLYR. Residues 406–425 form a helical membrane-spanning segment; that stretch reads GLLPQLMGVAPEKAIKLTVN. Residues 426–448 are Mitochondrial intermembrane-facing; sequence DLVRDKLTDKKGNIPTWAEVLAG. A helical transmembrane segment spans residues 449–462; that stretch reads GCAGASQVVFTNPL. At 463 to 497 the chain is on the mitochondrial matrix side; it reads EIVKIRLQVAGEIASGSKIRAWSVVRELGLFGLYK. The helical transmembrane segment at 498-517 threads the bilayer; that stretch reads GARACLLRDVPFSAIYFPTY. Over 518-536 the chain is Mitochondrial intermembrane; it reads AHTKAMMADKDGYNHPLTL. Residues 537 to 554 traverse the membrane as a helical segment; the sequence is LAAGAIAGVPAASLVTPA. Residues 555–593 lie on the Mitochondrial matrix side of the membrane; the sequence is DVIKTRLQVVARSGQTTYTGVWDATKKIMAEEGPRAFWK. The chain crosses the membrane as a helical span at residues 594 to 613; the sequence is GTAARVFRSSPQFGVTLVTY. Residues 614 to 695 lie on the Mitochondrial intermembrane side of the membrane; the sequence is ELLQRLFYVD…AASPSTATGS (82 aa). Residues 628–695 form a C-terminal domain region; sequence QPKGSEAHKI…AASPSTATGS (68 aa).

The protein belongs to the mitochondrial carrier (TC 2.A.29) family. Homodimer (via N-terminus). The cofactor is Ca(2+). Expressed throughout the body in both males and females, including in ovaries and testes. As to expression, specifically expressed in female ovaries. In terms of tissue distribution, expressed throughout the body in both males and females but absent from ovaries and testes.

It is found in the mitochondrion inner membrane. The catalysed reaction is L-aspartate(in) + L-glutamate(out) + H(+)(out) = L-aspartate(out) + L-glutamate(in) + H(+)(in). It catalyses the reaction 3-sulfino-L-alanine(out) + L-glutamate(in) + H(+)(in) = 3-sulfino-L-alanine(in) + L-glutamate(out) + H(+)(out). The enzyme catalyses L-2-aminoadipate(in) + L-glutamate(out) + H(+)(out) = L-2-aminoadipate(out) + L-glutamate(in) + H(+)(in). It carries out the reaction L-glutamine(in) + L-glutamate(out) + Na(+)(out) + H(+)(out) = L-glutamine(out) + L-glutamate(in) + Na(+)(in) + H(+)(in). Its activity is regulated as follows. Activated by Ca(2+). Inhibited by p-chloromercuribenzoate, pyrocarbonate, mersalyl, tannic acid and N-ethylmaleimide. Mitochondrial electrogenic aspartate/glutamate antiporter that favors efflux of aspartate and entry of glutamate and proton within the mitochondria as part of the malate-aspartate shuttle. Also mediates the exchange of L-cysteinesulfinate (3-sulfino-L-alanine) for L-glutamate. Necessary for gamma-aminobutyric acid (GABA) uptake in brain mitochondria in response to increased mitochondrial membrane polarization; does not possess detectable GABA transport activity but role may be indirect. Functionally, possesses transport activity towards L-aspartate, L-glutamate and L-cysteinesulfinate (3-sulfino-L-alanine). L-glutamine transport activity is undetectable. GABA transport activity is undetectable. In terms of biological role, possesses transport activity towards L-aspartate, L-glutamate and L-cysteinesulfinate (3-sulfino-L-alanine). Has a wider substrate specificity range that includes L-2-aminoadipate and L-glutamine. GABA transport activity is undetectable. This Drosophila melanogaster (Fruit fly) protein is Electrogenic aspartate/glutamate antiporter Aralar, mitochondrial.